Reading from the N-terminus, the 478-residue chain is Glutamate--tRNA ligase (478 aa).

A 'HIGH' region motif is present at residues 9–19 (PSPTGLLHIGT). A 'KMSKS' region motif is present at residues 248–252 (KLSKR). ATP is bound at residue K251.

It belongs to the class-I aminoacyl-tRNA synthetase family. Glutamate--tRNA ligase type 1 subfamily. As to quaternary structure, monomer.

The protein localises to the cytoplasm. The catalysed reaction is tRNA(Glu) + L-glutamate + ATP = L-glutamyl-tRNA(Glu) + AMP + diphosphate. Catalyzes the attachment of glutamate to tRNA(Glu) in a two-step reaction: glutamate is first activated by ATP to form Glu-AMP and then transferred to the acceptor end of tRNA(Glu). This Prochlorococcus marinus (strain MIT 9515) protein is Glutamate--tRNA ligase.